Reading from the N-terminus, the 426-residue chain is Dihydropyrimidine dehydrogenase (NADP(+)), chloroplastic (426 aa).

The N-terminal 44 residues, 1–44 (MASMSFALNRFSGLSSKTTLSADFDPSSRRSFLPPTRVGLKISS), are a transit peptide targeting the chloroplast. N-acetylalanine is present on alanine 45. Residues asparagine 129 and 188 to 190 (NFS) each bind substrate. Cysteine 191 serves as the catalytic Nucleophile. Substrate is bound at residue 256-257 (NT). Residues 395 to 414 (VEQRKAEKRGLKSDKDWTGD) form a disordered region.

This sequence belongs to the dihydropyrimidine dehydrogenase family. In terms of tissue distribution, expressed in roots, leaves, stems, siliques and flowers. Highly expressed ion dry seeds.

Its subcellular location is the plastid. The protein localises to the chloroplast. The enzyme catalyses 5,6-dihydrouracil + NADP(+) = uracil + NADPH + H(+). Its pathway is amino-acid biosynthesis; beta-alanine biosynthesis. Involved in pyrimidine base degradation. Catalyzes the reduction of uracil to 5,6-dihydrouracil (DHU) by using NADH as a specific cosubstrate and the reduction of thymine to 5,6-dihydrothymine (DHT). Involved in the recycling of nitrogen from nucleobases to general nitrogen metabolism. This chain is Dihydropyrimidine dehydrogenase (NADP(+)), chloroplastic, found in Arabidopsis thaliana (Mouse-ear cress).